The following is a 213-amino-acid chain: Orotate phosphoribosyltransferase (213 aa).

Lysine 26 is a 5-phospho-alpha-D-ribose 1-diphosphate binding site. 34–35 (FF) is a binding site for orotate. Residues 72–73 (YK), arginine 99, lysine 100, lysine 103, histidine 105, and 124–132 (DDVITAGTA) contribute to the 5-phospho-alpha-D-ribose 1-diphosphate site. Orotate contacts are provided by threonine 128 and arginine 156.

It belongs to the purine/pyrimidine phosphoribosyltransferase family. PyrE subfamily. Homodimer. It depends on Mg(2+) as a cofactor.

The catalysed reaction is orotidine 5'-phosphate + diphosphate = orotate + 5-phospho-alpha-D-ribose 1-diphosphate. The protein operates within pyrimidine metabolism; UMP biosynthesis via de novo pathway; UMP from orotate: step 1/2. Catalyzes the transfer of a ribosyl phosphate group from 5-phosphoribose 1-diphosphate to orotate, leading to the formation of orotidine monophosphate (OMP). This chain is Orotate phosphoribosyltransferase, found in Escherichia coli O45:K1 (strain S88 / ExPEC).